We begin with the raw amino-acid sequence, 539 residues long: Sorting nexin-27 (539 aa).

Positions 1 to 40 are disordered; it reads MADEDGEGIHPSAPHRNGGGGGGSGLHCAGNGGGGGGGPR. The span at 17–39 shows a compositional bias: gly residues; that stretch reads NGGGGGGSGLHCAGNGGGGGGGP. In terms of domain architecture, PDZ spans 41–134; that stretch reads VVRIVKSESG…ELILTVLSVP (94 aa). Ser49 and Ser60 each carry phosphoserine. One can recognise a PX domain in the interval 159–267; it reads QAVPISVPTY…EFLSESDENY (109 aa). In terms of domain architecture, Ras-associating spans 271 to 360; that stretch reads SDVELRVALP…TCLTIRKWLF (90 aa). Residues 271–360 form an FERM-like region F1 region; sequence SDVELRVALP…TCLTIRKWLF (90 aa). Positions 371 to 419 are FERM-like region F2; it reads NDLAVTYFFHQAVDDVKKGYIKAEEKSYQLQKLHEQRKMVMYLNMLRTC. The FERM-like region F3 stretch occupies residues 423–523; that stretch reads NEIIFPHCAC…RVFCELKWRK (101 aa).

In terms of assembly, core component of the SNX27-retromer, a multiprotein complex composed of SNX27, the WASH complex and the retromer complex. Interacts (via the FERM-like regions) with the WASH complex. Interacts with SNX1. Interacts with CYTIP. Interacts with DGKZ. Interacts with MCC. Interacts (via PDZ domain) with a number of target transmembrane proteins (via PDZ-binding motif): ABCC4, ADRB2, ARHGEF7, GRIA1, GRIA2, GRIN1, GRIN2A GRIN2C, KCNJ6, KCNJ9 and SLC2A1/GLUT1. Interacts (via PDZ domains) with SLC9A3; directs SLC9A3 membrane insertion from early endosomes to the plasma membrane. In terms of tissue distribution, expressed in cells of hematopoietic origin.

It localises to the early endosome membrane. The protein localises to the cytoplasm. Its subcellular location is the cytosol. Its function is as follows. Involved in the retrograde transport from endosome to plasma membrane, a trafficking pathway that promotes the recycling of internalized transmembrane proteins. Following internalization, endocytosed transmembrane proteins are delivered to early endosomes and recycled to the plasma membrane instead of being degraded in lysosomes. SNX27 specifically binds and directs sorting of a subset of transmembrane proteins containing a PDZ-binding motif at the C-terminus: following interaction with target transmembrane proteins, associates with the retromer complex, preventing entry into the lysosomal pathway, and promotes retromer-tubule based plasma membrane recycling. SNX27 also binds with the WASH complex. Interacts with membranes containing phosphatidylinositol-3-phosphate (PtdIns(3P)). May participate in establishment of natural killer cell polarity. Recruits CYTIP to early endosomes. In Mus musculus (Mouse), this protein is Sorting nexin-27 (Snx27).